Here is a 181-residue protein sequence, read N- to C-terminus: NAD(P)H-quinone oxidoreductase subunit 6, chloroplastic (181 aa).

A run of 5 helical transmembrane segments spans residues Pro-13 to Gly-33, Ile-35 to Leu-55, Ala-64 to Ile-84, Phe-98 to Ile-118, and Leu-152 to Ile-172.

The protein belongs to the complex I subunit 6 family. NDH is composed of at least 16 different subunits, 5 of which are encoded in the nucleus.

The protein resides in the plastid. It localises to the chloroplast thylakoid membrane. The enzyme catalyses a plastoquinone + NADH + (n+1) H(+)(in) = a plastoquinol + NAD(+) + n H(+)(out). It catalyses the reaction a plastoquinone + NADPH + (n+1) H(+)(in) = a plastoquinol + NADP(+) + n H(+)(out). NDH shuttles electrons from NAD(P)H:plastoquinone, via FMN and iron-sulfur (Fe-S) centers, to quinones in the photosynthetic chain and possibly in a chloroplast respiratory chain. The immediate electron acceptor for the enzyme in this species is believed to be plastoquinone. Couples the redox reaction to proton translocation, and thus conserves the redox energy in a proton gradient. The sequence is that of NAD(P)H-quinone oxidoreductase subunit 6, chloroplastic (ndhG) from Staurastrum punctulatum (Green alga).